Consider the following 697-residue polypeptide: uncharacterized protein (697 aa).

Transmembrane regions (helical) follow at residues 65 to 85 (PVRN…VGIY), 106 to 126 (CTFR…LHNF), 131 to 151 (YRQS…EKAI), 163 to 183 (DAAL…DINE), 194 to 214 (LSSY…VPLG), 227 to 247 (TSAT…TASI), 286 to 306 (STNA…ANKD), 316 to 336 (PVTD…VLLE), 361 to 381 (SDEI…PEGV), 394 to 414 (MFEL…MAWE), 419 to 439 (ERML…EPYH), 450 to 470 (SVKR…YLAI), 487 to 507 (QGSQ…YKVW), and 558 to 578 (TSAG…HHRQ). The segment at 246 to 321 (SINVRTSATT…NRFHPVTDIN (76 aa)) is disordered. Positions 251–298 (TSATTTESTNSNTNATTTESTNSSTNATTTASTNSSTNATTTESTNAS) are enriched in low complexity. Over residues 299–321 (AKEDANKDGNAEDNRFHPVTDIN) the composition is skewed to basic and acidic residues.

The protein resides in the membrane. This is an uncharacterized protein from Saccharomyces cerevisiae (strain ATCC 204508 / S288c) (Baker's yeast).